A 325-amino-acid polypeptide reads, in one-letter code: Glutarate 2-hydroxylase (325 aa).

Fe cation is bound by residues H160, D162, and H292.

This sequence belongs to the glutarate hydroxylase family. Homotetramer. Requires Fe(2+) as cofactor.

It catalyses the reaction glutarate + 2-oxoglutarate + O2 = (S)-2-hydroxyglutarate + succinate + CO2. Its pathway is amino-acid degradation. In terms of biological role, acts as an alpha-ketoglutarate-dependent dioxygenase catalyzing hydroxylation of glutarate (GA) to L-2-hydroxyglutarate (L2HG). Functions in a L-lysine degradation pathway that proceeds via cadaverine, glutarate and L-2-hydroxyglutarate. The chain is Glutarate 2-hydroxylase from Shigella boydii serotype 18 (strain CDC 3083-94 / BS512).